The sequence spans 858 residues: MSVVGLDVGSQSCYIAVARAGGIETIANEFSDRCTPSVISFGSKNRTIGVAAKNQQITHANNTVSSFKRFHGRAFNDPFIQKEKENLSYDLVPMKNGGVGIKVMYMDEEHFFSVEQITAMLLTKLKETAENNLKKPVTDCVISVPSFFTDAERRSVLDAAQIVGLNCLRLMNDMTAVALNYGIYKQDLPNAEEKPRVVVFVDMGHSSFQVSACAFNKGKLKVLGTAFDPFLGGKNFDEKLVEHFCAEFKTKYKLDAKSKIRALLRLHQECEKLKKLMSSNSTDLPLNIECFMNDKDVSGKMNRSQFEELCAELLQKIEVPLHSLMAQTQLKAEDVSAIEIVGGATRIPAVKERIAKFFGKDVSTTLNADEAVARGCALQCAILSPAFKVREFSVTDAVPFPISLVWNHDSEETEGVHEVFSRNHAAPFSKVLTFLRRGPFELEAFYSDPQGVPYPEAKIGRFVVQNVSAQKDGEKSRVKVKVRVNTHGIFTISTASMVEKVPTEEEDGSSLEADMECPNQRPTESSDVDKNIQQDNSEAGTQPQVQTDGQQTSQSPPSPELTSEESKTPDADKANEKKVDQPPEAKKPKIKVVNVELPVEANLVWQLGRDLLNMYIETEGKMIMQDKLEKERNDAKNAVEECVYEFRDKLCGPYEKFICEQEHEKFLRLLTETEDWLYEEGEDQAKQAYIDKLEELMKMGTPVKVRFQEAEERPKVLEELGQRLQHYAKIAADFRGKDEKYNHIDESEMKKVEKSVNEVMEWMNNVMNAQAKRSLDQDPVVRTHEIRAKVKELNNVCEPVVTQPKPKIESPKLERTPNGPNIDKKEDLEGKNNLGAEAPHQNGECHPNEKGSVNMDLD.

The residue at position 2 (S2) is an N-acetylserine. The residue at position 471 (K471) is an N6-acetyllysine. Disordered stretches follow at residues 500 to 585 and 801 to 858; these read KVPT…PPEA and VTQP…MDLD. Acidic residues predominate over residues 504–515; sequence EEEDGSSLEADM. Residues S509 and S510 each carry the phosphoserine modification. Polar residues predominate over residues 533 to 549; that stretch reads QQDNSEAGTQPQVQTDG. At S558 the chain carries Phosphoserine. T562 is modified (phosphothreonine). Basic and acidic residues-rich tracts occupy residues 564 to 585 and 806 to 815; these read EESK…PPEA and PKIESPKLER. S810 carries the post-translational modification Phosphoserine. A Phosphothreonine modification is found at T816.

This sequence belongs to the heat shock protein 70 family. Interacts with HSPA8/HSC70. Interacts with HSPA1A (via NBD) and HSPA1B (via NBD). In terms of processing, phosphorylation on Ser-509 may be important for regulation of the HSPA8/HSC70 chaperone activity. In terms of tissue distribution, expressed in neurons in the cerebrum and Purkinje cells in the cerebellum (at protein level). Expressed in testis and no expression or only low-level expression in liver, spleen, lung, and kidney (at protein level). Highly expressed in the brain and moderately expressed in lung, heart, thymus, spleen, liver, and small intestine.

Its subcellular location is the cytoplasm. The protein resides in the nucleus. In terms of biological role, acts as a nucleotide-exchange factor (NEF) for chaperone proteins HSPA1A and HSPA1B, promoting the release of ADP from HSPA1A/B thereby triggering client/substrate protein release. Prevents the aggregation of denatured proteins in cells under severe stress, on which the ATP levels decrease markedly. Inhibits HSPA8/HSC70 ATPase and chaperone activities. This is Heat shock protein 105 kDa (Hsph1) from Mus musculus (Mouse).